The chain runs to 629 residues: Glycerol-3-phosphate dehydrogenase SDP6, mitochondrial (629 aa).

The N-terminal 48 residues, 1 to 48 (MSLASIRRLAAGAAVIAAASGGAVYLSPSVASSDKGGGPILDSLRRRL), are a transit peptide targeting the mitochondrion. Position 75–103 (75–103 (DVLVIGGGATGSGVALDAVTRGLRVGLVE)) interacts with FAD.

Belongs to the FAD-dependent glycerol-3-phosphate dehydrogenase family. Requires FAD as cofactor. As to expression, expressed in germinating seedlings. Also detected in roots, leaves, flowers, developing siliques and germinating seeds.

It is found in the mitochondrion inner membrane. It catalyses the reaction a quinone + sn-glycerol 3-phosphate = dihydroxyacetone phosphate + a quinol. The protein operates within polyol metabolism; glycerol degradation via glycerol kinase pathway; glycerone phosphate from sn-glycerol 3-phosphate (anaerobic route): step 1/1. Its function is as follows. Required for glycerol catabolism and involved in NADH/NAD(+) homeostasis. Essential for postgerminative growth and seedling establishment. In Arabidopsis thaliana (Mouse-ear cress), this protein is Glycerol-3-phosphate dehydrogenase SDP6, mitochondrial.